A 124-amino-acid chain; its full sequence is Small ribosomal subunit protein uS12 (124 aa).

Position 89 is a 3-methylthioaspartic acid (Asp-89).

It belongs to the universal ribosomal protein uS12 family. In terms of assembly, part of the 30S ribosomal subunit. Contacts proteins S8 and S17. May interact with IF1 in the 30S initiation complex.

Functionally, with S4 and S5 plays an important role in translational accuracy. Its function is as follows. Interacts with and stabilizes bases of the 16S rRNA that are involved in tRNA selection in the A site and with the mRNA backbone. Located at the interface of the 30S and 50S subunits, it traverses the body of the 30S subunit contacting proteins on the other side and probably holding the rRNA structure together. The combined cluster of proteins S8, S12 and S17 appears to hold together the shoulder and platform of the 30S subunit. The chain is Small ribosomal subunit protein uS12 from Pasteurella multocida (strain Pm70).